Here is a 391-residue protein sequence, read N- to C-terminus: Ethanol acetyltransferase 1 (391 aa).

Residues 1-24 (MFFTKVLNNQVANGLKQLPVHKRV) constitute a mitochondrion transit peptide. Positions 48–154 (PIVFVHGIFG…DNSPIEQPHI (107 aa)) constitute an AB hydrolase-1 domain. Catalysis depends on charge relay system residues Ser121, Asp145, and His295.

This sequence belongs to the AB hydrolase superfamily.

It localises to the mitochondrion. The enzyme catalyses ethanol + acetyl-CoA = ethyl acetate + CoA. It catalyses the reaction acetyl-CoA + H2O = acetate + CoA + H(+). It carries out the reaction ethyl acetate + H2O = ethanol + acetate + H(+). With respect to regulation, by ethanol. Thioesterase and esterase reactions are highly repressed in the presence of high ethanol concentrations. Its function is as follows. Alcohol acetyltransferase that catalyzes the synthesis of ethyl acetate from ethanol and acetyl-CoA. Can also function as a thioesterase by hydrolyzing acetyl-CoA in the absence of ethanol, as well as esterase hydrolyzing ethyl acetate. In Wickerhamomyces anomalus (strain ATCC 58044 / CBS 1984 / NCYC 433 / NRRL Y-366-8) (Yeast), this protein is Ethanol acetyltransferase 1 (EAT1).